The following is a 262-amino-acid chain: Intercellular adhesion molecule 4 (262 aa).

The N-terminal stretch at 1-22 (MESALLLPSLLLVAAYPRGGSP) is a signal peptide. The Extracellular segment spans residues 23-231 (QQEWMQSPPA…LTVLALSPAS (209 aa)). 2 Ig-like C2-type domains span residues 54–116 (GGSA…TREA) and 138–209 (GHKY…LNLD). N-linked (GlcNAc...) asparagine glycans are attached at residues Asn60, Asn84, and Asn182. Intrachain disulfides connect Cys61–Cys105, Cys61–Cys109, Cys65–Cys109, and Cys145–Cys202. Residues 232 to 252 (IALASTSIATLVGILLAVGAV) form a helical membrane-spanning segment. At 253–262 (YVRKYLAVQT) the chain is on the cytoplasmic side.

The protein belongs to the immunoglobulin superfamily. ICAM family.

It is found in the cell membrane. It localises to the secreted. Adhesion molecule that binds to leukocyte adhesion LFA-1 protein LFA-1 (integrin alpha-L/beta-2). ICAM4 is also a ligand for alpha-4/beta-1 and alpha-V integrins. Isoform 2 may modulate binding of membrane-associated ICAM4. The polypeptide is Intercellular adhesion molecule 4 (Icam4) (Mus musculus (Mouse)).